We begin with the raw amino-acid sequence, 583 residues long: Sphingomyelin phosphodiesterase A (583 aa).

Residues 1–21 form the signal peptide; that stretch reads MKSIPIILLVLIGLLLASVYS. One can recognise a Saposin B-type domain in the interval 51–133; sequence IQLSCDVCQI…GYFKICSATG (83 aa). Disulfide bonds link cysteine 55-cysteine 129, cysteine 58-cysteine 123, and cysteine 86-cysteine 97. Asparagine 72 carries N-linked (GlcNAc...) asparagine glycosylation. Asparagine 182 carries an N-linked (GlcNAc...) asparagine glycan. 2 residues coordinate Zn(2+): aspartate 193 and histidine 195. Cysteine 214 and cysteine 229 are joined by a disulfide. Zn(2+)-binding residues include aspartate 258 and asparagine 298. N-linked (GlcNAc...) asparagine glycosylation occurs at asparagine 377. Zn(2+) contacts are provided by histidine 401, histidine 436, and histidine 438. Residues asparagine 495, asparagine 500, asparagine 537, and asparagine 547 are each glycosylated (N-linked (GlcNAc...) asparagine). A disulfide bridge links cysteine 567 with cysteine 580.

The protein belongs to the acid sphingomyelinase family. Requires Zn(2+) as cofactor.

The protein localises to the secreted. Converts sphingomyelin to ceramide. The protein is Sphingomyelin phosphodiesterase A (sgmA) of Dictyostelium discoideum (Social amoeba).